We begin with the raw amino-acid sequence, 698 residues long: MTIFRPHLRFLFKPHFLYFQSPIGKSSRPFSTSQILRTALDMPPPPVDTTQRLAKLRELMAQNKVDVYSMQFRYTIKAPLIITVVYSFFFFLLLALKLCLRKTAISQSTLLHVTGVETLIRITAAFISSFTGSAGCAIVSMSKAALSTDGRYFSQAAKQLDANWTLLKRGVEGVPTWEEWTAEQAENGKVVGVDPSLITAGENLQYSPLTSVIVVNCSYVIADARKLSQTLKTTGGSLIGIDQNLIDAVWGDERPARPANQITVQPVERAGKSFEEKVEDLRKELAAKKRSAMVISTLDEIAWLFNLRGSDIPYNPVFFSYAIVTPSVAELYVDESKLSPEARKHLEGKVILKPYDSIFQASKVLAESKASASSGSSGKFLLSNKASWSLSLALGGEQNVVEVRSPITDAKAIKNEVELEGFRKCHIRDGAALIEYFAWLENALIKEGAQLDEVDGADKLFEIRKKYDLFVGNSFDTISSTGANGATIHYKPEKSTCAVIDPEAMYLCDSGGQYLDGTTDTTRTLHFGEPTEFQKKAYALVLKGHISIDNAIFPKGTTGYAIDSFARQHLWKEGLDYLHGTGHGVGSFLYAEVPLSANNVLSNEPGYYEDGNFGIRLENLVICKEVQTAHKFGDKPFLGFESITLVPFCQKLLDASLLTEAERKWVNDYHARVWEKTSPFFEKDELTTAWLKRETQPI.

Positions 509, 520, 604, and 618 each coordinate Mn(2+).

The protein belongs to the peptidase M24B family. The cofactor is Mn(2+).

It carries out the reaction Release of any N-terminal amino acid, including proline, that is linked to proline, even from a dipeptide or tripeptide.. In terms of biological role, catalyzes the removal of a penultimate prolyl residue from the N-termini of peptides. The protein is Probable Xaa-Pro aminopeptidase P (AMPP) of Arthroderma benhamiae (strain ATCC MYA-4681 / CBS 112371) (Trichophyton mentagrophytes).